We begin with the raw amino-acid sequence, 252 residues long: Secreted LysM effector LysM1 (252 aa).

The LysM 1 domain maps to 20–64 (FAIPGDPGDTCDTLSDRWGITIDIFKSLNPGVNCPNLVANMEYCV). The tract at residues 71–98 (DTPSTTTTAKPTMTPTSTPTKTTTTSTA) is disordered. The span at 72–98 (TPSTTTTAKPTMTPTSTPTKTTTTSTA) shows a compositional bias: low complexity. LysM domains are found at residues 126–172 (KFHL…YVCV) and 204–250 (KFHL…YVCI).

This sequence belongs to the secreted LysM effector family.

The protein resides in the secreted. Its subcellular location is the cell wall. Its function is as follows. Secreted effector that binds two substrates, chitin and N-linked oligosaccharides associated with human skin glycoproteins. Could provide the pathogen with three important functions including shielding host cell wall chitin from the human immune system, shielding the pathogen's glycoproteins from host degradation and immune surveillance, and helping facilitate pathogen adhesion to human skin. This is Secreted LysM effector LysM1 from Trichophyton rubrum (strain ATCC MYA-4607 / CBS 118892) (Athlete's foot fungus).